Consider the following 351-residue polypeptide: tRNA uridine(34) hydroxylase (351 aa).

Residues 146–240 (DDPQALFVDM…YARRAREQGL (95 aa)) enclose the Rhodanese domain. C200 serves as the catalytic Cysteine persulfide intermediate.

The protein belongs to the TrhO family.

The enzyme catalyses uridine(34) in tRNA + AH2 + O2 = 5-hydroxyuridine(34) in tRNA + A + H2O. Its function is as follows. Catalyzes oxygen-dependent 5-hydroxyuridine (ho5U) modification at position 34 in tRNAs. The polypeptide is tRNA uridine(34) hydroxylase (Sodalis glossinidius (strain morsitans)).